The sequence spans 115 residues: Large ribosomal subunit protein bL20 (115 aa).

Belongs to the bacterial ribosomal protein bL20 family.

Its function is as follows. Binds directly to 23S ribosomal RNA and is necessary for the in vitro assembly process of the 50S ribosomal subunit. It is not involved in the protein synthesizing functions of that subunit. The sequence is that of Large ribosomal subunit protein bL20 from Prochlorococcus marinus (strain MIT 9215).